Consider the following 704-residue polypeptide: Elongation factor G (704 aa).

In terms of domain architecture, tr-type G spans D8–L291. Residues A17–T24, D90–H94, and N144–D147 each bind GTP.

It belongs to the TRAFAC class translation factor GTPase superfamily. Classic translation factor GTPase family. EF-G/EF-2 subfamily.

It is found in the cytoplasm. Its function is as follows. Catalyzes the GTP-dependent ribosomal translocation step during translation elongation. During this step, the ribosome changes from the pre-translocational (PRE) to the post-translocational (POST) state as the newly formed A-site-bound peptidyl-tRNA and P-site-bound deacylated tRNA move to the P and E sites, respectively. Catalyzes the coordinated movement of the two tRNA molecules, the mRNA and conformational changes in the ribosome. The chain is Elongation factor G from Chlorobium luteolum (strain DSM 273 / BCRC 81028 / 2530) (Pelodictyon luteolum).